Here is a 691-residue protein sequence, read N- to C-terminus: Elongation factor G (691 aa).

One can recognise a tr-type G domain in the interval 8–282 (ERVRNIGIAA…AVVDYLPAPV (275 aa)). GTP contacts are provided by residues 17 to 24 (AHIDAGKT), 81 to 85 (DTPGH), and 135 to 138 (NKMD).

This sequence belongs to the TRAFAC class translation factor GTPase superfamily. Classic translation factor GTPase family. EF-G/EF-2 subfamily.

It localises to the cytoplasm. In terms of biological role, catalyzes the GTP-dependent ribosomal translocation step during translation elongation. During this step, the ribosome changes from the pre-translocational (PRE) to the post-translocational (POST) state as the newly formed A-site-bound peptidyl-tRNA and P-site-bound deacylated tRNA move to the P and E sites, respectively. Catalyzes the coordinated movement of the two tRNA molecules, the mRNA and conformational changes in the ribosome. The protein is Elongation factor G of Prochlorococcus marinus (strain AS9601).